Here is a 174-residue protein sequence, read N- to C-terminus: Xanthine-guanine phosphoribosyltransferase (174 aa).

Residues 49–50 (RG) and 108–116 (DDLVDTGAT) each bind 5-phospho-alpha-D-ribose 1-diphosphate. Position 109 (Asp109) interacts with Mg(2+). 2 residues coordinate guanine: Asp112 and Ile155. Asp112 and Ile155 together coordinate xanthine. GMP-binding positions include 112–116 (DTGAT) and 154–155 (WI).

This sequence belongs to the purine/pyrimidine phosphoribosyltransferase family. XGPT subfamily. Homotetramer. Mg(2+) serves as cofactor.

The protein resides in the cell inner membrane. The catalysed reaction is GMP + diphosphate = guanine + 5-phospho-alpha-D-ribose 1-diphosphate. The enzyme catalyses XMP + diphosphate = xanthine + 5-phospho-alpha-D-ribose 1-diphosphate. It catalyses the reaction IMP + diphosphate = hypoxanthine + 5-phospho-alpha-D-ribose 1-diphosphate. The protein operates within purine metabolism; GMP biosynthesis via salvage pathway; GMP from guanine: step 1/1. Its pathway is purine metabolism; XMP biosynthesis via salvage pathway; XMP from xanthine: step 1/1. Functionally, purine salvage pathway enzyme that catalyzes the transfer of the ribosyl-5-phosphate group from 5-phospho-alpha-D-ribose 1-diphosphate (PRPP) to the N9 position of the 6-oxopurines guanine and xanthine to form the corresponding ribonucleotides GMP (guanosine 5'-monophosphate) and XMP (xanthosine 5'-monophosphate), with the release of PPi. To a lesser extent, also acts on hypoxanthine. The protein is Xanthine-guanine phosphoribosyltransferase of Rhodopseudomonas palustris (strain BisB18).